The following is a 247-amino-acid chain: Carboxy-S-adenosyl-L-methionine synthase (247 aa).

S-adenosyl-L-methionine contacts are provided by residues Y39, 64 to 66 (GCS), 89 to 90 (DN), 117 to 118 (DI), N132, and R199.

The protein belongs to the class I-like SAM-binding methyltransferase superfamily. Cx-SAM synthase family. As to quaternary structure, homodimer.

The enzyme catalyses prephenate + S-adenosyl-L-methionine = carboxy-S-adenosyl-L-methionine + 3-phenylpyruvate + H2O. In terms of biological role, catalyzes the conversion of S-adenosyl-L-methionine (SAM) to carboxy-S-adenosyl-L-methionine (Cx-SAM). The polypeptide is Carboxy-S-adenosyl-L-methionine synthase (Shigella sonnei (strain Ss046)).